The chain runs to 264 residues: ATP synthase subunit a (264 aa).

6 helical membrane-spanning segments follow: residues 32 to 52, 89 to 109, 134 to 154, 177 to 197, 208 to 228, and 235 to 255; these read IDSL…FHSV, VIAP…FMDM, DLNI…YYSI, IPVN…SLAL, LIFI…TLGV, and LIFH…LTIV.

The protein belongs to the ATPase A chain family. As to quaternary structure, F-type ATPases have 2 components, CF(1) - the catalytic core - and CF(0) - the membrane proton channel. CF(1) has five subunits: alpha(3), beta(3), gamma(1), delta(1), epsilon(1). CF(0) has three main subunits: a(1), b(2) and c(9-12). The alpha and beta chains form an alternating ring which encloses part of the gamma chain. CF(1) is attached to CF(0) by a central stalk formed by the gamma and epsilon chains, while a peripheral stalk is formed by the delta and b chains.

It localises to the cell inner membrane. In terms of biological role, key component of the proton channel; it plays a direct role in the translocation of protons across the membrane. The sequence is that of ATP synthase subunit a from Shewanella piezotolerans (strain WP3 / JCM 13877).